The primary structure comprises 358 residues: WAT1-related protein At3g28080 (358 aa).

10 helical membrane-spanning segments follow: residues 12–32 (AVFL…STLF), 42–62 (IYPF…PSLF), 81–101 (IGLL…GIEY), 105–125 (TLAS…AVIF), 137–157 (SVAK…VIFY), 187–207 (WLIG…SFIL), 219–239 (FTVS…IGLV), 245–265 (PSIW…TGII), 283–303 (LYLA…GTIF), and 308–328 (LYLG…VVMW). The region spanning 27-155 (GLSTLFKVAT…LSLIGAFVVI (129 aa)) is the EamA domain.

Belongs to the drug/metabolite transporter (DMT) superfamily. Plant drug/metabolite exporter (P-DME) (TC 2.A.7.4) family.

The protein resides in the membrane. The protein is WAT1-related protein At3g28080 of Arabidopsis thaliana (Mouse-ear cress).